Consider the following 178-residue polypeptide: Stathmin-2-A (178 aa).

In terms of domain architecture, SLD spans 38–178; it reads DDMEIKQLNK…RNKEQLELSG (141 aa). Positions 75-178 form a coiled coil; the sequence is KKKDVSLGEI…RNKEQLELSG (104 aa).

Belongs to the stathmin family. Nervous tissue.

Its subcellular location is the cytoplasm. It localises to the membrane. The protein localises to the cell projection. The protein resides in the lamellipodium. The protein is Stathmin-2-A (stmn2-a) of Xenopus laevis (African clawed frog).